The primary structure comprises 496 residues: Rhamnulokinase (496 aa).

13-17 (ASSGR) contributes to the ATP binding site. Residues G83 and 236–238 (HDT) contribute to the substrate site. D237 functions as the Proton acceptor in the catalytic mechanism. An ATP-binding site is contributed by T259. Substrate is bound at residue N296. Q304 provides a ligand contact to ATP. C353 and C370 form a disulfide bridge. Residue G402 coordinates ATP. C413 and C417 are joined by a disulfide.

It belongs to the rhamnulokinase family. Mg(2+) serves as cofactor.

The catalysed reaction is L-rhamnulose + ATP = L-rhamnulose 1-phosphate + ADP + H(+). It participates in carbohydrate degradation; L-rhamnose degradation; glycerone phosphate from L-rhamnose: step 2/3. Involved in the catabolism of L-rhamnose (6-deoxy-L-mannose). Catalyzes the transfer of the gamma-phosphate group from ATP to the 1-hydroxyl group of L-rhamnulose to yield L-rhamnulose 1-phosphate. This is Rhamnulokinase from Pectobacterium carotovorum subsp. carotovorum (strain PC1).